A 342-amino-acid polypeptide reads, in one-letter code: Paired box protein Pax-9 (342 aa).

Positions 4–130 form a DNA-binding region, paired; sequence AFGEVNQLGG…SSISRILRNK (127 aa). Positions 7–63 are PAI subdomain; it reads EVNQLGGVFVNGRPLPNAIRLRIVELAQLGIRPCDISRQLRVSHGCVSKILARYNET. Positions 82-130 are RED subdomain; it reads TVVKHIRTYKQRDPGIFAWEIRDRLLADGVCDKYNVPSVSSISRILRNK. The segment at 168-189 is interaction with KDM5B; sequence AAAAKVPTPPGVPAIPGSVALP.

As to quaternary structure, interacts with KDM5B.

It localises to the nucleus. Its function is as follows. Transcription factor required for normal development of thymus, parathyroid glands, ultimobranchial bodies, teeth, skeletal elements of skull and larynx as well as distal limbs. In Rattus norvegicus (Rat), this protein is Paired box protein Pax-9.